We begin with the raw amino-acid sequence, 411 residues long: Serpin A3-5 (411 aa).

The N-terminal stretch at 1–24 is a signal peptide; sequence MRAERTSFLLALGLLMAGIRSVHC. Asn-100, Asn-180, Asn-230, Asn-264, and Asn-318 each carry an N-linked (GlcNAc...) asparagine glycan.

The protein belongs to the serpin family. As to quaternary structure, homodimer.

It is found in the cytoplasmic vesicle. It localises to the secretory vesicle. The protein localises to the chromaffin granule. Its subcellular location is the secreted. Serine protease inhibitor. This chain is Serpin A3-5, found in Bos taurus (Bovine).